Here is a 247-residue protein sequence, read N- to C-terminus: UPF0246 protein LCABL_22600 (247 aa).

The protein belongs to the UPF0246 family.

This is UPF0246 protein LCABL_22600 from Lacticaseibacillus casei (strain BL23) (Lactobacillus casei).